The following is a 132-amino-acid chain: D-ribose pyranase (132 aa).

Residue His20 is the Proton donor of the active site. Substrate contacts are provided by residues Asp28, His98, and 121 to 123; that span reads YSN.

It belongs to the RbsD / FucU family. RbsD subfamily. In terms of assembly, homodecamer.

It localises to the cytoplasm. The enzyme catalyses beta-D-ribopyranose = beta-D-ribofuranose. It functions in the pathway carbohydrate metabolism; D-ribose degradation; D-ribose 5-phosphate from beta-D-ribopyranose: step 1/2. Catalyzes the interconversion of beta-pyran and beta-furan forms of D-ribose. In Kosmotoga olearia (strain ATCC BAA-1733 / DSM 21960 / TBF 19.5.1), this protein is D-ribose pyranase.